A 441-amino-acid polypeptide reads, in one-letter code: uncharacterized protein (441 aa).

217-224 (GETGTGKT) contributes to the ATP binding site.

It belongs to the GSP E family.

This is an uncharacterized protein from Bacillus anthracis.